The following is a 333-amino-acid chain: NADH-quinone oxidoreductase subunit H (333 aa).

8 helical membrane passes run 17–37, 88–108, 117–137, 159–179, 191–211, 241–261, 273–293, and 313–333; these read IFFA…TYGI, FILA…ALPF, IGVG…GVVT, ISYE…SGSL, VWFI…AVAE, FFML…TVLF, FIPG…LFIW, and VLLP…QLFF.

This sequence belongs to the complex I subunit 1 family. As to quaternary structure, NDH-1 is composed of 14 different subunits. Subunits NuoA, H, J, K, L, M, N constitute the membrane sector of the complex.

It localises to the cell membrane. It catalyses the reaction a quinone + NADH + 5 H(+)(in) = a quinol + NAD(+) + 4 H(+)(out). Functionally, NDH-1 shuttles electrons from NADH, via FMN and iron-sulfur (Fe-S) centers, to quinones in the respiratory chain. The immediate electron acceptor for the enzyme in this species is believed to be ubiquinone. Couples the redox reaction to proton translocation (for every two electrons transferred, four hydrogen ions are translocated across the cytoplasmic membrane), and thus conserves the redox energy in a proton gradient. This subunit may bind ubiquinone. In Anoxybacillus flavithermus (strain DSM 21510 / WK1), this protein is NADH-quinone oxidoreductase subunit H.